A 77-amino-acid polypeptide reads, in one-letter code: Liver-expressed antimicrobial peptide 2 (77 aa).

The N-terminal stretch at 1 to 22 (MWHLKLFAVLVICLLLAVQVHG) is a signal peptide. The propeptide occupies 23-37 (SPIPELSSAKRRPRR). Disulfide bonds link Cys54–Cys65 and Cys60–Cys70.

The protein belongs to the LEAP2 family.

The protein resides in the secreted. Functionally, has an antimicrobial activity. The protein is Liver-expressed antimicrobial peptide 2 (LEAP2) of Sus scrofa (Pig).